An 862-amino-acid chain; its full sequence is Protein translocase subunit SecA (862 aa).

ATP is bound by residues Q88, 106 to 110 (GEGKT), and D506. Positions 839, 841, 850, and 851 each coordinate Zn(2+).

It belongs to the SecA family. As to quaternary structure, monomer and homodimer. Part of the essential Sec protein translocation apparatus which comprises SecA, SecYEG and auxiliary proteins SecDF-YajC and YidC. Zn(2+) is required as a cofactor.

The protein resides in the cell inner membrane. It localises to the cytoplasm. The catalysed reaction is ATP + H2O + cellular proteinSide 1 = ADP + phosphate + cellular proteinSide 2.. Functionally, part of the Sec protein translocase complex. Interacts with the SecYEG preprotein conducting channel. Has a central role in coupling the hydrolysis of ATP to the transfer of proteins into and across the cell membrane, serving as an ATP-driven molecular motor driving the stepwise translocation of polypeptide chains across the membrane. The chain is Protein translocase subunit SecA from Campylobacter jejuni subsp. jejuni serotype O:2 (strain ATCC 700819 / NCTC 11168).